The following is a 232-amino-acid chain: Large ribosomal subunit protein uL1 (232 aa).

Belongs to the universal ribosomal protein uL1 family. Part of the 50S ribosomal subunit.

Its function is as follows. Binds directly to 23S rRNA. The L1 stalk is quite mobile in the ribosome, and is involved in E site tRNA release. Protein L1 is also a translational repressor protein, it controls the translation of the L11 operon by binding to its mRNA. The protein is Large ribosomal subunit protein uL1 of Chlamydia abortus (strain DSM 27085 / S26/3) (Chlamydophila abortus).